We begin with the raw amino-acid sequence, 428 residues long: Histone deacetylase 3 (428 aa).

A histone deacetylase region spans residues 3–316; sequence KTVAYFYDPD…WTYETSLLVE (314 aa). 1D-myo-inositol 1,4,5,6-tetrakisphosphate-binding residues include His17, Gly21, and Lys25. Residue His135 is part of the active site. Residues Asp170, His172, and Asp259 each contribute to the Zn(2+) site. Position 265 (Arg265) interacts with 1D-myo-inositol 1,4,5,6-tetrakisphosphate. 2 stretches are compositionally biased toward basic and acidic residues: residues 388–405 and 415–428; these read DRTDEADAEERGPEENYS and DGDHDNDKESDVEI. The segment at 388 to 428 is disordered; it reads DRTDEADAEERGPEENYSRPEAPNEFYDGDHDNDKESDVEI. Position 424 is a phosphoserine (Ser424).

This sequence belongs to the histone deacetylase family. HD type 1 subfamily. In terms of assembly, interacts with HDAC7 and HDAC9. Interacts with HDAC10, DAXX and DACH1. Found in a complex with NCOR1 and NCOR2. Component of the N-Cor repressor complex, at least composed of NCOR1, NCOR2, HDAC3, TBL1X, TBL1R, CORO2A and GPS2. Interacts with BCOR, MJD2A/JHDM3A, NRIP1, PRDM6 and SRY. Interacts with BTBD14B. Interacts with GLIS2. Interacts (via the DNA-binding domain) with NR2C1; the interaction recruits phosphorylated NR2C1 to PML bodies for sumoylation. Component of the Notch corepressor complex. Interacts with CBFA2T3 and NKAP. Interacts with APEX1; the interaction is not dependent on the acetylated status of APEX1. Interacts with and deacetylates MAPK14. Interacts with ZMYND15. Interacts with SMRT/NCOR2 and BCL6 on DNA enhancer elements. Interacts with INSM1. Interacts with XBP1; the interaction occurs in endothelial cell (EC) under disturbed flow. Interacts (via C-terminus) with CCAR2 (via N-terminus). Interacts with and deacetylates MEF2D. Interacts with BEND3. Interacts with NKAPL. Interacts with DHX36; this interaction occurs in a RNA-dependent manner. Interacts weakly with CRY1; this interaction is enhanced in the presence of FBXL3. Interacts with FBXL3 and BMAL1. Interacts with NCOR1. Interacts with RARA. Interacts with SETD5. Post-translationally, deubiquitinated on 'Lys-63'-linked ubiquitin chains by USP38; leading to a decreased level of histone acetylation. In terms of processing, sumoylated in vitro.

The protein localises to the nucleus. The protein resides in the chromosome. It localises to the cytoplasm. It is found in the cytosol. It carries out the reaction N(6)-acetyl-L-lysyl-[histone] + H2O = L-lysyl-[histone] + acetate. It catalyses the reaction N(6)-acetyl-L-lysyl-[protein] + H2O = L-lysyl-[protein] + acetate. The enzyme catalyses N(6)-(2E)-butenoyl-L-lysyl-[protein] + H2O = (2E)-2-butenoate + L-lysyl-[protein]. The catalysed reaction is N(6)-(2-hydroxyisobutanoyl)-L-lysyl-[protein] + H2O = 2-hydroxy-2-methylpropanoate + L-lysyl-[protein]. It carries out the reaction N(6)-[(S)-lactoyl]-L-lysyl-[protein] + H2O = (S)-lactate + L-lysyl-[protein]. Inositol tetraphosphate (1D-myo-inositol 1,4,5,6-tetrakisphosphate) promotes the histone deacetylase activity by acting as an intermolecular glue between HDAC3 and NCOR2, thereby promoting its association with the N-Cor complex, a prerequisite for the histone deacetylase activity. Functionally, histone deacetylase that catalyzes the deacetylation of lysine residues on the N-terminal part of the core histones (H2A, H2B, H3 and H4), and some other non-histone substrates. Histone deacetylation gives a tag for epigenetic repression and plays an important role in transcriptional regulation, cell cycle progression and developmental events. Histone deacetylases act via the formation of large multiprotein complexes, such as N-Cor repressor complex, which activate the histone deacetylase activity. Participates in the BCL6 transcriptional repressor activity by deacetylating the H3 'Lys-27' (H3K27) on enhancer elements, antagonizing EP300 acetyltransferase activity and repressing proximal gene expression. Acts as a molecular chaperone for shuttling phosphorylated NR2C1 to PML bodies for sumoylation. Contributes, together with XBP1 isoform 1, to the activation of NFE2L2-mediated HMOX1 transcription factor gene expression in a PI(3)K/mTORC2/Akt-dependent signaling pathway leading to endothelial cell (EC) survival under disturbed flow/oxidative stress. Regulates both the transcriptional activation and repression phases of the circadian clock in a deacetylase activity-independent manner. During the activation phase, promotes the accumulation of ubiquitinated BMAL1 at the E-boxes and during the repression phase, blocks FBXL3-mediated CRY1/2 ubiquitination and promotes the interaction of CRY1 and BMAL1. The NCOR1-HDAC3 complex regulates the circadian expression of the core clock gene BMAL1 and the genes involved in lipid metabolism in the liver. Also functions as a deacetylase for non-histone targets, such as KAT5, MEF2D, MAPK14, RARA and STAT3. Serves as a corepressor of RARA, mediating its deacetylation and repression, leading to inhibition of RARE DNA element binding. In association with RARA, plays a role in the repression of microRNA-10a and thereby in the inflammatory response. In addition to protein deacetylase activity, also acts as a protein-lysine deacylase by recognizing other acyl groups: catalyzes removal of (2E)-butenoyl (crotonyl), lactoyl (lactyl) and 2-hydroxyisobutanoyl (2-hydroxyisobutyryl) acyl groups from lysine residues, leading to protein decrotonylation, delactylation and de-2-hydroxyisobutyrylation, respectively. Catalyzes decrotonylation of MAPRE1/EB1. Mediates delactylation NBN/NBS1, thereby inhibiting DNA double-strand breaks (DSBs) via homologous recombination (HR). The protein is Histone deacetylase 3 (HDAC3) of Pongo abelii (Sumatran orangutan).